A 709-amino-acid polypeptide reads, in one-letter code: MAETLEFNDVYQEVKGSMNDGRLRLSRQGIIFKNSKTGKVDNIQAGELTEGIWRRVALGHGLKLLTKNGHVYKYDGFRESEFEKLSDFFKTHYRLELMEKDLCVKGWNWGTVKFGGQLLSFDIGDQPVFEIPLSNVSQCTTGKNEVTLEFHQNDDAEVSLMEVRFYVPPTQEDGVDPVEAFAQNVLSKADVIQATGDAICIFRELQCLTPRGRYDIRIYPTFLHLHGKTFDYKIPYTTVLRLFLLPHKDQRQMFFVISLDPPIKQGQTRYHFLILLFSKDEDISLTLNMNEEEVEKRFEGRLTKNMSGSLYEMVSRVMKALVNRKITVPGNFQGHSGAQCITCSYKASSGLLYPLERGFIYVHKPPVHIRFDEISFVNFARGTTTTRSFDFEIETKQGTQYTFSSIEREEYGKLFDFVNAKKLNIKNRGLKEGMNPSYDEYADSDEDQHDAYLERMKEEGKIREENANDSSDDSGEETDESFNPGEEEEDVAEEFDSNASASSSSNEGDSDRDEKKRKQLKKAKMAKDRKSRKKPVEVKKGKDPNAPKRPMSAYMLWLNASREKIKSDHPGISITDLSKKAGEIWKGMSKEKKEEWDRKAEDARRDYEKAMKEYEGGRGESSKRDKSKKKKKVKVKMEKKSTPSRGSSSKSSSRQLSESFKSKEFVSSDESSSGENKSKKKRRRSEDSEEEELASTPPSSEDSASGSDE.

Position 2 is an N-acetylalanine (alanine 2). A Glycyl lysine isopeptide (Lys-Gly) (interchain with G-Cter in SUMO2) cross-link involves residue lysine 90. Threonine 170 is modified (phosphothreonine). Lysine 233 is subject to N6-acetyllysine. Glycyl lysine isopeptide (Lys-Gly) (interchain with G-Cter in SUMO2) cross-links involve residues lysine 296 and lysine 364. Position 413 is an N6-acetyllysine (lysine 413). Serine 437 is modified (phosphoserine). Tyrosine 441 bears the Phosphotyrosine mark. Serine 444 carries the post-translational modification Phosphoserine. Tyrosine 452 carries the post-translational modification Phosphotyrosine. Residues 458-709 (EEGKIREENA…SEDSASGSDE (252 aa)) are disordered. Acidic residues predominate over residues 470 to 496 (SSDDSGEETDESFNPGEEEEDVAEEFD). The residue at position 471 (serine 471) is a Phosphoserine. A compositionally biased stretch (low complexity) spans 497–507 (SNASASSSSNE). At serine 510 the chain carries Phosphoserine; by CK2. Over residues 515-533 (KKRKQLKKAKMAKDRKSRK) the composition is skewed to basic residues. Basic and acidic residues-rich tracts occupy residues 534-546 (KPVE…DPNA) and 577-624 (LSKK…SSKR). Lysine 542 is subject to N6-acetyllysine. A DNA-binding region (HMG box) is located at residues 547 to 615 (PKRPMSAYML…DYEKAMKEYE (69 aa)). A compositionally biased stretch (basic residues) spans 625–634 (DKSKKKKKVK). Over residues 643 to 659 (PSRGSSSKSSSRQLSES) the composition is skewed to low complexity. Serine 657, serine 659, serine 667, serine 668, serine 671, serine 672, and serine 673 each carry phosphoserine. Phosphoserine; by CK2 is present on serine 688. Residues 696–709 (TPPSSEDSASGSDE) show a composition bias toward polar residues.

The protein belongs to the SSRP1 family. In terms of assembly, interacts with MYOG (via C-terminal region). Component of the FACT complex, a stable heterodimer of SSRP1 and SUPT16H. Also a component of a CK2-SPT16-SSRP1 complex which forms following UV irradiation, composed of SSRP1, SUPT16H, CSNK2A1, CSNK2A2 and CSNK2B. Binds to histone H3-H4 tetramers, but not to intact nucleosomes. Identified in a centromere complex containing histones H2A, H2B and H4, and at least CENPA, CENPB, CENPC, CENPT, CENPN, HJURP, SUPT16H, SSRP1 and RSF1. Interacts with isoform gamma of TP63. Interacts with FYTTD1/UIF. Interacts with SRF. Interacts with NEK9. (Microbial infection) Interacts with Herpes simplex virus 1 (HHV-1) protein ICP22; this interaction relocalizes the FACT complex to viral genomes in infected cells. In terms of processing, phosphorylated by CK2 following UV but not gamma irradiation. Phosphorylation inhibits its DNA-binding activity. Post-translationally, ubiquitinated. Polyubiquitinated following caspase cleavage resulting in degradation of the N-terminal ubiquitinated part of the cleaved protein. Sumoylated.

It is found in the nucleus. The protein resides in the nucleolus. The protein localises to the chromosome. In terms of biological role, component of the FACT complex, a general chromatin factor that acts to reorganize nucleosomes. The FACT complex is involved in multiple processes that require DNA as a template such as mRNA elongation, DNA replication and DNA repair. During transcription elongation the FACT complex acts as a histone chaperone that both destabilizes and restores nucleosomal structure. It facilitates the passage of RNA polymerase II and transcription by promoting the dissociation of one histone H2A-H2B dimer from the nucleosome, then subsequently promotes the reestablishment of the nucleosome following the passage of RNA polymerase II. The FACT complex is probably also involved in phosphorylation of 'Ser-392' of p53/TP53 via its association with CK2 (casein kinase II). Binds specifically to double-stranded DNA and at low levels to DNA modified by the antitumor agent cisplatin. May potentiate cisplatin-induced cell death by blocking replication and repair of modified DNA. Also acts as a transcriptional coactivator for p63/TP63. The polypeptide is FACT complex subunit SSRP1 (SSRP1) (Homo sapiens (Human)).